The sequence spans 210 residues: Small ribosomal subunit protein uS3 (210 aa).

The KH type-2 domain occupies 38 to 106 (IRAFLKKRLY…EIFINIIEVR (69 aa)).

Belongs to the universal ribosomal protein uS3 family. Part of the 30S ribosomal subunit. Forms a tight complex with proteins S10 and S14.

In terms of biological role, binds the lower part of the 30S subunit head. Binds mRNA in the 70S ribosome, positioning it for translation. The protein is Small ribosomal subunit protein uS3 of Pelobacter propionicus (strain DSM 2379 / NBRC 103807 / OttBd1).